Reading from the N-terminus, the 1216-residue chain is Metabotropic glycine receptor (1216 aa).

The N-terminal stretch at 1–23 is a signal peptide; sequence MGVMAYPFLFCLLLVHFGLGAIG. Over 24-417 the chain is Extracellular; the sequence is ASREAPSRPD…CFVQEDKYLR (394 aa). A disordered region spans residues 25–65; that stretch reads SREAPSRPDPPRERTLRAKQHAQQPARASASDPSAPWSRST. Residues 28-40 show a composition bias toward basic and acidic residues; it reads APSRPDPPRERTL. A compositionally biased stretch (low complexity) spans 46–64; the sequence is AQQPARASASDPSAPWSRS. A cache-like region region spans residues 85 to 281; the sequence is YLYTGDSHKL…CENGSYKPGW (197 aa). N-linked (GlcNAc...) asparagine glycans are attached at residues Asn-98 and Asn-143. Cys-99 and Cys-272 are joined by a disulfide. Glycine is bound by residues Ser-172 and Arg-173. Asn-215 carries an N-linked (GlcNAc...) asparagine glycan. Glu-271 is a glycine binding site. The N-linked (GlcNAc...) asparagine glycan is linked to Asn-274. Asp-307 lines the glycine pocket. Asn-333 carries N-linked (GlcNAc...) asparagine glycosylation. The helical transmembrane segment at 418 to 439 threads the bilayer; that stretch reads LAIISFQALCMLLDFLSMLVVY. The Cytoplasmic segment spans residues 440-451; the sequence is RFRKAKSIRASG. The helical transmembrane segment at 452–474 threads the bilayer; sequence LILLETILFGSLLLYFPVVILYF. Residues 475–478 lie on the Extracellular side of the membrane; it reads EPST. The helical transmembrane segment at 479 to 501 threads the bilayer; that stretch reads FRCILLRWVRLLGFATVYGTVTL. Cys-481 and Cys-573 form a disulfide bridge. The Cytoplasmic portion of the chain corresponds to 502–525; the sequence is KLHRVLKVFLSRTAQRIPYMTGGR. The helical transmembrane segment at 526–547 threads the bilayer; the sequence is VMRMLAVILLVVFWFLVGWTSS. At 548-576 the chain is on the extracellular side; the sequence is VCQNLERHISLIGQGRTSDHLIFSMCLVE. Residues 577–597 traverse the membrane as a helical segment; sequence RWDYMTAAAEFLFLLWGVYLC. The Cytoplasmic segment spans residues 598–611; that stretch reads YAVRTVPSAFHEPR. A helical transmembrane segment spans residues 612–633; that stretch reads YMAVAVHNELIISAIFHTIRFV. The Extracellular segment spans residues 634–642; it reads LASRLQSDW. The chain crosses the membrane as a helical span at residues 643 to 664; it reads MLMLYFAHTHLTVTVTIGLLLI. Over 665 to 1216 the chain is Cytoplasmic; that stretch reads PKFSHSSNNP…NEEVRLARKV (552 aa). Phosphoserine occurs at positions 694, 705, and 708. Disordered stretches follow at residues 757–875 and 911–1000; these read RITE…ESVP and KEKT…HMKD. Residues 769 to 781 show a composition bias toward basic and acidic residues; sequence CSKEDKDGGEHGS. A Glycyl lysine isopeptide (Lys-Gly) (interchain with G-Cter in ubiquitin) cross-link involves residue Lys-774. A compositionally biased stretch (polar residues) spans 864 to 873; it reads EDSQAVSTES. Ser-866 carries the phosphoserine modification. Residues 926 to 944 are compositionally biased toward basic and acidic residues; the sequence is VEERAKAQKALPRERETNR. Polar residues-rich tracts occupy residues 945 to 963 and 980 to 991; these read KYSN…PNSS and QRANPTTANSDL. Phosphoserine is present on Ser-947. Residues 1007 to 1011 carry the VCPWE motif 1 motif; that stretch reads VCPWE. The disordered stretch occupies residues 1038–1072; sequence ERNPTFSLKEKSHPKPKAADLCQQSNPKSVDKAEV. Position 1066 is a phosphoserine (Ser-1066). Positions 1072-1076 match the VCPWE motif 2 motif; it reads VCPWE. Ser-1081 is modified (phosphoserine). The interval 1128–1167 is disordered; it reads SKVENENLNQLGEQEKKTSSSERNVPDSHNSSNNFQPPLM. Over residues 1140–1153 the composition is skewed to basic and acidic residues; it reads EQEKKTSSSERNVP. Residues 1154–1163 show a composition bias toward polar residues; sequence DSHNSSNNFQ. The VCPWE motif 3 signature appears at 1172–1176; sequence VCPWE.

This sequence belongs to the G-protein coupled receptor 3 family. In terms of assembly, homodimer. Associates with the RGS7-GNB5 complex, promoting its localization to the cell membrane and regulating its GTPase activator activity. Interacts (via VCPWE motifs) with GNAO1. Interacts with GPC4. Interacts with EGFLAM.

It is found in the cell membrane. The protein localises to the postsynaptic cell membrane. Its subcellular location is the presynaptic cell membrane. The protein resides in the nucleus. Functionally, metabotropic receptor for glycine that controls synapse formation and function in the brain. Acts as an atypical G-protein coupled receptor that recruits and regulates the RGS7-GNB5 complex instead of activating G proteins. In absence of glycine ligand, promotes the GTPase activator activity of RGS7, increasing the GTPase activity of G protein alpha subunits, thereby driving them into their inactive GDP-bound form. Glycine-binding changes the conformation of the intracellular surface, inhibiting the GTPase activator activity of the RGS7-GNB5 complex, promoting G protein alpha subunits into their active GTP-bound form and regulating cAMP levels. Also able to bind taurine, a compound closely related to glycine, but with a two-fold lower affinity. Glycine receptor-dependent regulation of cAMP controls key ion channels, kinases and neurotrophic factors involved in neuronal excitability and synaptic transmission. Plays a pivotal role in regulating mood and cognition via its ability to regulate neuronal excitability in L2/L3 pyramidal neurons of the prefrontal cortex. Also involved in spatial learning by regulating hippocampal CA1 neuronal excitability. Acts as a synaptic organizer in the hippocampus, required for proper mossy fiber-CA3 neurocircuitry establishment, structure and function: induces presynaptic differentiation in contacting axons via its interaction with GPC4. In addition to glycine, may also act as a receptor for osteocalcin (BGLAP) hormone: osteocalcin-binding initiates a signaling response that prevents neuronal apoptosis in the hippocampus and regulates the synthesis of neurotransmitters. This Bos taurus (Bovine) protein is Metabotropic glycine receptor (GPR158).